The following is a 312-amino-acid chain: Protoheme IX farnesyltransferase 1 (312 aa).

The next 9 membrane-spanning stretches (helical) occupy residues 21–41 (GVLAAYLALTKPRVIELLLVT), 53–73 (IPSPWLVLVTLAGGAMSAGSA), 105–125 (SALVFGIVLGVVSFAVLALGA), 127–147 (LLAAVLSLAAILFYVFVYTLV), 156–176 (IVWGGAAGCMPVVIGWAAVTG), 182–202 (ALVMFGVVFLWTPPHFWSLAM), 225–245 (VSARILVYSWATVACTLLLVP), 246–266 (ATSWVYVAFAVLAGAAFLIVA), and 292–312 (LALLFVAIAVDSAVGLPSFVA).

This sequence belongs to the UbiA prenyltransferase family. Protoheme IX farnesyltransferase subfamily.

It is found in the cell membrane. It carries out the reaction heme b + (2E,6E)-farnesyl diphosphate + H2O = Fe(II)-heme o + diphosphate. Its pathway is porphyrin-containing compound metabolism; heme O biosynthesis; heme O from protoheme: step 1/1. Its function is as follows. Converts heme B (protoheme IX) to heme O by substitution of the vinyl group on carbon 2 of heme B porphyrin ring with a hydroxyethyl farnesyl side group. This chain is Protoheme IX farnesyltransferase 1, found in Saccharopolyspora erythraea (strain ATCC 11635 / DSM 40517 / JCM 4748 / NBRC 13426 / NCIMB 8594 / NRRL 2338).